The primary structure comprises 430 residues: Glutamine synthetase, chloroplastic/mitochondrial (430 aa).

Residues 1–45 (MAQILAASPTCQMRVPKHSSVIASSSKLWSSVVLKQKKQSNNKVR) constitute a chloroplast and mitochondrion transit peptide. The GS beta-grasp domain occupies 77–157 (IIAEYIWIGG…VICDTWTPAG (81 aa)). A disordered region spans residues 97–122 (TIEKPVEDPSELPKWNYDGSSTGQAP). A Phosphoserine modification is found at serine 106. The region spanning 161–430 (PTNKRAKAAE…LAAQKLSLNV (270 aa)) is the GS catalytic domain.

The protein belongs to the glutamine synthetase family. In terms of assembly, homooctamer. In terms of tissue distribution, expressed in mesophyll and epidermal cells of leaves.

It localises to the plastid. The protein localises to the chloroplast. The protein resides in the mitochondrion. The catalysed reaction is L-glutamate + NH4(+) + ATP = L-glutamine + ADP + phosphate + H(+). Functionally, the light-modulated chloroplast/mitochondrial enzyme, encoded by a nuclear gene and expressed primarily in leaves, is responsible for the reassimilation of the ammonia generated by photorespiration. The polypeptide is Glutamine synthetase, chloroplastic/mitochondrial (GLN2) (Arabidopsis thaliana (Mouse-ear cress)).